Reading from the N-terminus, the 113-residue chain is UPF0102 protein CHU_0465 (113 aa).

Belongs to the UPF0102 family.

The chain is UPF0102 protein CHU_0465 from Cytophaga hutchinsonii (strain ATCC 33406 / DSM 1761 / CIP 103989 / NBRC 15051 / NCIMB 9469 / D465).